A 100-amino-acid polypeptide reads, in one-letter code: Small ribosomal subunit protein uS14c (100 aa).

Belongs to the universal ribosomal protein uS14 family. In terms of assembly, part of the 30S ribosomal subunit.

It is found in the plastid. The protein resides in the chloroplast. Functionally, binds 16S rRNA, required for the assembly of 30S particles. This Pyropia yezoensis (Susabi-nori) protein is Small ribosomal subunit protein uS14c.